The following is a 286-amino-acid chain: Ribosome-inactivating protein momordin II (286 aa).

Positions 1-23 (MVKCLLLSFLIIAIFIGVPTAKG) are cleaved as a signal peptide. The active site involves Glu181.

This sequence belongs to the ribosome-inactivating protein family. Type 1 RIP subfamily.

The enzyme catalyses Endohydrolysis of the N-glycosidic bond at one specific adenosine on the 28S rRNA.. This is Ribosome-inactivating protein momordin II from Momordica balsamina (Bitter gourd).